We begin with the raw amino-acid sequence, 280 residues long: 2-dehydro-3-deoxyphosphooctonate aldolase (280 aa).

This sequence belongs to the KdsA family.

It is found in the cytoplasm. It catalyses the reaction D-arabinose 5-phosphate + phosphoenolpyruvate + H2O = 3-deoxy-alpha-D-manno-2-octulosonate-8-phosphate + phosphate. Its pathway is carbohydrate biosynthesis; 3-deoxy-D-manno-octulosonate biosynthesis; 3-deoxy-D-manno-octulosonate from D-ribulose 5-phosphate: step 2/3. The protein operates within bacterial outer membrane biogenesis; lipopolysaccharide biosynthesis. This chain is 2-dehydro-3-deoxyphosphooctonate aldolase, found in Neisseria meningitidis serogroup A / serotype 4A (strain DSM 15465 / Z2491).